A 230-amino-acid polypeptide reads, in one-letter code: Phosphoribosylformylglycinamidine synthase subunit PurQ (230 aa).

Residues 2–230 (KIAVTKFLGT…KGMIDYAKRI (229 aa)) enclose the Glutamine amidotransferase type-1 domain. Cys85 acts as the Nucleophile in catalysis. Catalysis depends on residues His202 and Glu204.

In terms of assembly, part of the FGAM synthase complex composed of 1 PurL, 1 PurQ and 2 PurS subunits.

It localises to the cytoplasm. It catalyses the reaction N(2)-formyl-N(1)-(5-phospho-beta-D-ribosyl)glycinamide + L-glutamine + ATP + H2O = 2-formamido-N(1)-(5-O-phospho-beta-D-ribosyl)acetamidine + L-glutamate + ADP + phosphate + H(+). It carries out the reaction L-glutamine + H2O = L-glutamate + NH4(+). It functions in the pathway purine metabolism; IMP biosynthesis via de novo pathway; 5-amino-1-(5-phospho-D-ribosyl)imidazole from N(2)-formyl-N(1)-(5-phospho-D-ribosyl)glycinamide: step 1/2. In terms of biological role, part of the phosphoribosylformylglycinamidine synthase complex involved in the purines biosynthetic pathway. Catalyzes the ATP-dependent conversion of formylglycinamide ribonucleotide (FGAR) and glutamine to yield formylglycinamidine ribonucleotide (FGAM) and glutamate. The FGAM synthase complex is composed of three subunits. PurQ produces an ammonia molecule by converting glutamine to glutamate. PurL transfers the ammonia molecule to FGAR to form FGAM in an ATP-dependent manner. PurS interacts with PurQ and PurL and is thought to assist in the transfer of the ammonia molecule from PurQ to PurL. The polypeptide is Phosphoribosylformylglycinamidine synthase subunit PurQ (Methanocaldococcus jannaschii (strain ATCC 43067 / DSM 2661 / JAL-1 / JCM 10045 / NBRC 100440) (Methanococcus jannaschii)).